The following is a 122-amino-acid chain: Large ribosomal subunit protein uL14 (122 aa).

This sequence belongs to the universal ribosomal protein uL14 family. Part of the 50S ribosomal subunit. Forms a cluster with proteins L3 and L19. In the 70S ribosome, L14 and L19 interact and together make contacts with the 16S rRNA in bridges B5 and B8.

Its function is as follows. Binds to 23S rRNA. Forms part of two intersubunit bridges in the 70S ribosome. This Acidiphilium cryptum (strain JF-5) protein is Large ribosomal subunit protein uL14.